Consider the following 129-residue polypeptide: UPF0325 protein HCH_00487 (129 aa).

It belongs to the UPF0325 family.

This Hahella chejuensis (strain KCTC 2396) protein is UPF0325 protein HCH_00487.